The sequence spans 417 residues: Magnesium-protoporphyrin IX monomethyl ester [oxidative] cyclase, chloroplastic (417 aa).

The transit peptide at Met-1–Arg-45 directs the protein to the chloroplast.

Belongs to the AcsF family. It depends on Fe cation as a cofactor.

It localises to the plastid. The protein localises to the chloroplast membrane. It catalyses the reaction Mg-protoporphyrin IX 13-monomethyl ester + 3 NADPH + 3 O2 + 2 H(+) = 3,8-divinyl protochlorophyllide a + 3 NADP(+) + 5 H2O. It participates in porphyrin-containing compound metabolism; chlorophyll biosynthesis. Its function is as follows. Catalyzes the formation of the isocyclic ring in chlorophyll biosynthesis. Mediates the cyclase reaction, which results in the formation of divinylprotochlorophyllide (Pchlide) characteristic of all chlorophylls from magnesium-protoporphyrin IX 13-monomethyl ester (MgPMME). This Hordeum vulgare (Barley) protein is Magnesium-protoporphyrin IX monomethyl ester [oxidative] cyclase, chloroplastic (CRD1).